Here is a 236-residue protein sequence, read N- to C-terminus: Lectin (236 aa).

Asparagine 118 carries N-linked (GlcNAc...) asparagine glycosylation.

It belongs to the leguminous lectin family. As to quaternary structure, homodimer of noncovalently associated chains.

Its function is as follows. D-mannose and D-glucose specific lectin. The protein is Lectin of Onobrychis viciifolia (Common sainfoin).